A 215-amino-acid polypeptide reads, in one-letter code: Peptide methionine sulfoxide reductase MsrA (215 aa).

Cysteine 58 is a catalytic residue.

This sequence belongs to the MsrA Met sulfoxide reductase family.

The enzyme catalyses L-methionyl-[protein] + [thioredoxin]-disulfide + H2O = L-methionyl-(S)-S-oxide-[protein] + [thioredoxin]-dithiol. It carries out the reaction [thioredoxin]-disulfide + L-methionine + H2O = L-methionine (S)-S-oxide + [thioredoxin]-dithiol. Functionally, has an important function as a repair enzyme for proteins that have been inactivated by oxidation. Catalyzes the reversible oxidation-reduction of methionine sulfoxide in proteins to methionine. The protein is Peptide methionine sulfoxide reductase MsrA of Pseudomonas aeruginosa (strain UCBPP-PA14).